Here is a 570-residue protein sequence, read N- to C-terminus: Urease subunit alpha (570 aa).

One can recognise a Urease domain in the interval 132–570 (GGIDTHVHFL…VPMARRYFLF (439 aa)). Residues histidine 137, histidine 139, and lysine 220 each contribute to the Ni(2+) site. Lysine 220 is subject to N6-carboxylysine. Histidine 222 lines the substrate pocket. Ni(2+) is bound by residues histidine 249 and histidine 275. Histidine 323 acts as the Proton donor in catalysis. Aspartate 363 is a binding site for Ni(2+).

This sequence belongs to the metallo-dependent hydrolases superfamily. Urease alpha subunit family. Heterotrimer of UreA (gamma), UreB (beta) and UreC (alpha) subunits. Three heterotrimers associate to form the active enzyme. Ni cation serves as cofactor. In terms of processing, carboxylation allows a single lysine to coordinate two nickel ions.

The protein localises to the cytoplasm. It carries out the reaction urea + 2 H2O + H(+) = hydrogencarbonate + 2 NH4(+). It functions in the pathway nitrogen metabolism; urea degradation; CO(2) and NH(3) from urea (urease route): step 1/1. The protein is Urease subunit alpha of Corynebacterium glutamicum (strain ATCC 13032 / DSM 20300 / JCM 1318 / BCRC 11384 / CCUG 27702 / LMG 3730 / NBRC 12168 / NCIMB 10025 / NRRL B-2784 / 534).